Reading from the N-terminus, the 206-residue chain is Glycerol-3-phosphate acyltransferase (206 aa).

5 helical membrane-spanning segments follow: residues 3–23, 51–71, 83–103, 113–133, and 162–182; these read LGWLLVIGSYLLGSVSFSYII, VGPAVTVLLLDILKGVIAVVV, FAAAAGIAAIIGHNWPIYYGF, IGVLASLVPLAAVLAGVIAIG, and WFGYPVAYIYLTIIVAILSMW.

This sequence belongs to the PlsY family. As to quaternary structure, probably interacts with PlsX.

It localises to the cell membrane. It carries out the reaction an acyl phosphate + sn-glycerol 3-phosphate = a 1-acyl-sn-glycero-3-phosphate + phosphate. The protein operates within lipid metabolism; phospholipid metabolism. Its function is as follows. Catalyzes the transfer of an acyl group from acyl-phosphate (acyl-PO(4)) to glycerol-3-phosphate (G3P) to form lysophosphatidic acid (LPA). This enzyme utilizes acyl-phosphate as fatty acyl donor, but not acyl-CoA or acyl-ACP. This Halalkalibacterium halodurans (strain ATCC BAA-125 / DSM 18197 / FERM 7344 / JCM 9153 / C-125) (Bacillus halodurans) protein is Glycerol-3-phosphate acyltransferase.